A 231-amino-acid chain; its full sequence is Lipoprotein-releasing system ATP-binding protein LolD (231 aa).

The 222-residue stretch at 9–230 (FSLKDVGKEY…LRAGELYDQN (222 aa)) folds into the ABC transporter domain. 45-52 (GASGSGKS) is an ATP binding site.

It belongs to the ABC transporter superfamily. Lipoprotein translocase (TC 3.A.1.125) family. The complex is composed of two ATP-binding proteins (LolD) and two transmembrane proteins (LolC and LolE).

It localises to the cell inner membrane. In terms of biological role, part of the ABC transporter complex LolCDE involved in the translocation of mature outer membrane-directed lipoproteins, from the inner membrane to the periplasmic chaperone, LolA. Responsible for the formation of the LolA-lipoprotein complex in an ATP-dependent manner. In Oleidesulfovibrio alaskensis (strain ATCC BAA-1058 / DSM 17464 / G20) (Desulfovibrio alaskensis), this protein is Lipoprotein-releasing system ATP-binding protein LolD.